Reading from the N-terminus, the 75-residue chain is Kappa-thalatoxin-Tas2a (75 aa).

The first 22 residues, 1-22 (MKFQMIAAVLLIAFCLSVVVTA), serve as a signal peptide directing secretion. A propeptide spanning residues 23–40 (RMELQDDEEMKNGSFQKR) is cleaved from the precursor. The ShKT domain occupies 43–75 (CIDTIPKSRCTAFQCKHSMKYRLSFCRKTCGTC). Cystine bridges form between cysteine 43–cysteine 75, cysteine 52–cysteine 68, and cysteine 57–cysteine 72.

Belongs to the sea anemone type 1 potassium channel toxin family. Type 1a subfamily.

It localises to the secreted. Its subcellular location is the nematocyst. Inhibits voltage-gated potassium channels (Kv) with higher potency for Kv1.1/KCNA1 and Kv1.3/KCNA3 (IC(50)=3.4 nM). This is Kappa-thalatoxin-Tas2a from Thalassianthus aster (Fuzzy-tipped anemone).